Here is a 488-residue protein sequence, read N- to C-terminus: Cis-aconitate decarboxylase (488 aa).

This sequence belongs to the PrpD family. In terms of assembly, homodimer. Expressed in LPS-tolerized macrophages (at protein level). Expressed in the luminal epithelial cells of pregnant uterus. Expressed in microglia and macrophage cells.

It is found in the mitochondrion. The catalysed reaction is cis-aconitate + H(+) = itaconate + CO2. In terms of biological role, cis-aconitate decarboxylase that catalyzes production of itaconate and is involved in the inhibition of the inflammatory response. Acts as a negative regulator of the Toll-like receptors (TLRs)-mediated inflammatory innate response by stimulating the tumor necrosis factor alpha-induced protein TNFAIP3 expression via reactive oxygen species (ROS) in LPS-tolerized macrophages. Involved in antimicrobial response of innate immune cells; ACOD1-mediated itaconic acid production contributes to the antimicrobial activity of macrophages by generating itaconate, leading to alkylation of proteins, such as TFEB. Involved in antiviral response following infection by flavivirus in neurons: ACOD1-mediated itaconate production inhibits the activity of succinate dehydrogenase, generating a metabolic state in neurons that suppresses replication of viral genomes. Plays a role in the embryo implantation. In Mus musculus (Mouse), this protein is Cis-aconitate decarboxylase.